Consider the following 160-residue polypeptide: MRIGIVAVGRLKAGPEKDLVSRYLDRFAKAGPASGLEFSRVNELPESRASNSATRKREEAVQIEKSLPDNPLVVALDERGKSWDSQEFATYVGDHKDRGRRDMVIVIGGADGLDPDFRDRADLVLNLGKMTWPHQLVRIMLAEQLYRAVTILSGHPYHRS.

The disordered stretch occupies residues 44-63; the sequence is LPESRASNSATRKREEAVQI. S-adenosyl-L-methionine contacts are provided by residues L76, G108, and 127 to 132; that span reads LGKMTW.

Belongs to the RNA methyltransferase RlmH family. Homodimer.

It is found in the cytoplasm. The enzyme catalyses pseudouridine(1915) in 23S rRNA + S-adenosyl-L-methionine = N(3)-methylpseudouridine(1915) in 23S rRNA + S-adenosyl-L-homocysteine + H(+). In terms of biological role, specifically methylates the pseudouridine at position 1915 (m3Psi1915) in 23S rRNA. This Allorhizobium ampelinum (strain ATCC BAA-846 / DSM 112012 / S4) (Agrobacterium vitis (strain S4)) protein is Ribosomal RNA large subunit methyltransferase H.